We begin with the raw amino-acid sequence, 313 residues long: Acetyl-coenzyme A carboxylase carboxyl transferase subunit alpha (313 aa).

The CoA carboxyltransferase C-terminal domain maps to 36–286 (RLDKEVKTIY…KEYFLDTLRT (251 aa)).

The protein belongs to the AccA family. Acetyl-CoA carboxylase is a heterohexamer composed of biotin carboxyl carrier protein (AccB), biotin carboxylase (AccC) and two subunits each of ACCase subunit alpha (AccA) and ACCase subunit beta (AccD).

It localises to the cytoplasm. The catalysed reaction is N(6)-carboxybiotinyl-L-lysyl-[protein] + acetyl-CoA = N(6)-biotinyl-L-lysyl-[protein] + malonyl-CoA. Its pathway is lipid metabolism; malonyl-CoA biosynthesis; malonyl-CoA from acetyl-CoA: step 1/1. In terms of biological role, component of the acetyl coenzyme A carboxylase (ACC) complex. First, biotin carboxylase catalyzes the carboxylation of biotin on its carrier protein (BCCP) and then the CO(2) group is transferred by the carboxyltransferase to acetyl-CoA to form malonyl-CoA. The polypeptide is Acetyl-coenzyme A carboxylase carboxyl transferase subunit alpha (Helicobacter acinonychis (strain Sheeba)).